The primary structure comprises 386 residues: Methylthioribose-1-phosphate isomerase (386 aa).

The Proton donor role is filled by aspartate 255.

It belongs to the eIF-2B alpha/beta/delta subunits family. MtnA subfamily.

The protein resides in the cytoplasm. Its subcellular location is the nucleus. The enzyme catalyses 5-(methylsulfanyl)-alpha-D-ribose 1-phosphate = 5-(methylsulfanyl)-D-ribulose 1-phosphate. The protein operates within amino-acid biosynthesis; L-methionine biosynthesis via salvage pathway; L-methionine from S-methyl-5-thio-alpha-D-ribose 1-phosphate: step 1/6. Catalyzes the interconversion of methylthioribose-1-phosphate (MTR-1-P) into methylthioribulose-1-phosphate (MTRu-1-P). The protein is Methylthioribose-1-phosphate isomerase of Trypanosoma brucei brucei (strain 927/4 GUTat10.1).